The sequence spans 364 residues: Chorismate synthase (364 aa).

Residues 41–60 are disordered; sequence MQHDLDRRRPGTSRYTTARR. R48 and R54 together coordinate NADP(+). FMN is bound by residues 125-127, 238-239, G278, 293-297, and R319; these read RSS, NA, and KPTSS.

The protein belongs to the chorismate synthase family. As to quaternary structure, homotetramer. The cofactor is FMNH2.

It carries out the reaction 5-O-(1-carboxyvinyl)-3-phosphoshikimate = chorismate + phosphate. It functions in the pathway metabolic intermediate biosynthesis; chorismate biosynthesis; chorismate from D-erythrose 4-phosphate and phosphoenolpyruvate: step 7/7. Functionally, catalyzes the anti-1,4-elimination of the C-3 phosphate and the C-6 proR hydrogen from 5-enolpyruvylshikimate-3-phosphate (EPSP) to yield chorismate, which is the branch point compound that serves as the starting substrate for the three terminal pathways of aromatic amino acid biosynthesis. This reaction introduces a second double bond into the aromatic ring system. The sequence is that of Chorismate synthase from Shewanella baltica (strain OS223).